The primary structure comprises 424 residues: Dihydrolipoyllysine-residue succinyltransferase component of 2-oxoglutarate dehydrogenase complex (424 aa).

Positions 1-76 constitute a Lipoyl-binding domain; the sequence is MPEVKVPELA…EVGQAIAVVG (76 aa). Residue K42 is modified to N6-lipoyllysine. Disordered stretches follow at residues 76 to 138 and 155 to 204; these read GEGS…KYAR and VRKE…RKKT. Residues 91–105 show a composition bias toward basic and acidic residues; the sequence is EAPKQETETSTDDKS. Polar residues predominate over residues 122-131; the sequence is DNNQRVNATP. One can recognise a Peripheral subunit-binding (PSBD) domain in the interval 128 to 164; that stretch reads NATPSARKYAREKGIDLSEIAAASNDVVRKEHVDQSQ. Residues 162–176 show a composition bias toward low complexity; sequence QSQTQTSTQQQAQPA. Residues H395 and D399 contribute to the active site.

It belongs to the 2-oxoacid dehydrogenase family. In terms of assembly, forms a 24-polypeptide structural core with octahedral symmetry. Part of the 2-oxoglutarate dehydrogenase (OGDH) complex composed of E1 (2-oxoglutarate dehydrogenase), E2 (dihydrolipoamide succinyltransferase) and E3 (dihydrolipoamide dehydrogenase); the complex contains multiple copies of the three enzymatic components (E1, E2 and E3). Requires (R)-lipoate as cofactor.

The enzyme catalyses N(6)-[(R)-dihydrolipoyl]-L-lysyl-[protein] + succinyl-CoA = N(6)-[(R)-S(8)-succinyldihydrolipoyl]-L-lysyl-[protein] + CoA. It participates in amino-acid degradation; L-lysine degradation via saccharopine pathway; glutaryl-CoA from L-lysine: step 6/6. Functionally, E2 component of the 2-oxoglutarate dehydrogenase (OGDH) complex which catalyzes the second step in the conversion of 2-oxoglutarate to succinyl-CoA and CO(2). The chain is Dihydrolipoyllysine-residue succinyltransferase component of 2-oxoglutarate dehydrogenase complex (odhB) from Staphylococcus saprophyticus subsp. saprophyticus (strain ATCC 15305 / DSM 20229 / NCIMB 8711 / NCTC 7292 / S-41).